Consider the following 281-residue polypeptide: MTHAIEVCGLTKSFRADRKALDDVTLHVAPGEMVALLGASGSGKSTLLRHIAGFVTSDAGAGEIVVNGRAVQRHGRLARNVRSVRSEIGFVFQQFNLVGRLPVMTNVLVGMLSRLPKWRSLLRLFKANEIQAGLHALAQVGIDDYAFQRASTLSGGQQQRAAIARTLVQNARVILADEPIASLDPESSRRVMSLLAQINRTRQVAVVVSLHQVDVAMRYCPRVVALRHGKVVYDGPSAALTPDMLRDLYGTEAEELLHDTLDSEPDAVPVPALAGMNIAAA.

Residues 5–253 (IEVCGLTKSF…MLRDLYGTEA (249 aa)) enclose the ABC transporter domain. 38-45 (GASGSGKS) lines the ATP pocket.

This sequence belongs to the ABC transporter superfamily. Phosphonates importer (TC 3.A.1.9.1) family. In terms of assembly, the complex is composed of two ATP-binding proteins (PhnC), two transmembrane proteins (PhnE) and a solute-binding protein (PhnD).

The protein resides in the cell inner membrane. The enzyme catalyses phosphonate(out) + ATP + H2O = phosphonate(in) + ADP + phosphate + H(+). Functionally, part of the ABC transporter complex PhnCDE involved in phosphonates import. Responsible for energy coupling to the transport system. In Cupriavidus pinatubonensis (strain JMP 134 / LMG 1197) (Cupriavidus necator (strain JMP 134)), this protein is Phosphonates import ATP-binding protein PhnC.